The sequence spans 132 residues: Small ribosomal subunit protein uS8c (132 aa).

The protein belongs to the universal ribosomal protein uS8 family. Part of the 30S ribosomal subunit.

It is found in the plastid. The protein localises to the chloroplast. In terms of biological role, one of the primary rRNA binding proteins, it binds directly to 16S rRNA central domain where it helps coordinate assembly of the platform of the 30S subunit. The sequence is that of Small ribosomal subunit protein uS8c (rps8) from Cycas taitungensis (Prince sago).